Reading from the N-terminus, the 134-residue chain is MIPIPSAIDGQSFLLQELEQVMKPLGYVINGGWEYDHGYFDYKIDDRDGYLFLRIPVNAVQGSLDERGAAVRIGTPFMLRQVFQADVDDHAEGGPFQSLFNQFSEPERRDAEIDPAFLDIGASLVKELEDVLLH.

This is an uncharacterized protein from Bacillus subtilis (strain 168).